A 244-amino-acid chain; its full sequence is Probable transcriptional regulatory protein Aasi_0624 (244 aa).

The protein belongs to the TACO1 family.

Its subcellular location is the cytoplasm. The protein is Probable transcriptional regulatory protein Aasi_0624 of Amoebophilus asiaticus (strain 5a2).